We begin with the raw amino-acid sequence, 394 residues long: Nicotinate phosphoribosyltransferase (394 aa).

At His-218 the chain carries Phosphohistidine; by autocatalysis.

It belongs to the NAPRTase family. Transiently phosphorylated on a His residue during the reaction cycle. Phosphorylation strongly increases the affinity for substrates and increases the rate of nicotinate D-ribonucleotide production. Dephosphorylation regenerates the low-affinity form of the enzyme, leading to product release.

It carries out the reaction nicotinate + 5-phospho-alpha-D-ribose 1-diphosphate + ATP + H2O = nicotinate beta-D-ribonucleotide + ADP + phosphate + diphosphate. The protein operates within cofactor biosynthesis; NAD(+) biosynthesis; nicotinate D-ribonucleotide from nicotinate: step 1/1. Functionally, catalyzes the synthesis of beta-nicotinate D-ribonucleotide from nicotinate and 5-phospho-D-ribose 1-phosphate at the expense of ATP. This Xylella fastidiosa (strain Temecula1 / ATCC 700964) protein is Nicotinate phosphoribosyltransferase.